We begin with the raw amino-acid sequence, 251 residues long: tRNA (guanine-N(7)-)-methyltransferase (251 aa).

Residues Gly72, 95 to 96, 132 to 133, and Leu152 each bind S-adenosyl-L-methionine; these read EI and NA. The active site involves Asp155. An S-adenosyl-L-methionine-binding site is contributed by 230 to 232; that stretch reads SEE.

The protein belongs to the class I-like SAM-binding methyltransferase superfamily. TrmB family.

It localises to the nucleus. The catalysed reaction is guanosine(46) in tRNA + S-adenosyl-L-methionine = N(7)-methylguanosine(46) in tRNA + S-adenosyl-L-homocysteine. It functions in the pathway tRNA modification; N(7)-methylguanine-tRNA biosynthesis. In terms of biological role, catalyzes the formation of N(7)-methylguanine at position 46 (m7G46) in tRNA. In Drosophila willistoni (Fruit fly), this protein is tRNA (guanine-N(7)-)-methyltransferase.